A 499-amino-acid chain; its full sequence is Putative sodium-dependent excitatory amino acid transporter glt-4 (499 aa).

The Cytoplasmic segment spans residues 1–7; the sequence is MAKLSKE. 3 consecutive transmembrane segments (helical) span residues 8–28, 50–70, and 87–107; these read NLLL…GFSL, FVQM…ITSL, and IYYT…VSVI. Asn165 is a glycosylation site (N-linked (GlcNAc...) asparagine). A run of 3 helical transmembrane segments spans residues 194–217, 227–254, and 276–297; these read VSDG…IGVI, FFKS…TFLI, and ITVI…CVVL. An intramembrane region (discontinuously helical) is located at residues 303–333; it reads IKFVGGMAQALLTALATSSSSATLPLSIKCC. Residue 320 to 322 coordinates L-aspartate; the sequence is SSS. Residues 343 to 369 form a helical membrane-spanning segment; sequence VTRFVLPLGATINMDGTALYEAVAAIY. Residues Gly351, Thr353, and Asn355 each coordinate Na(+). Residues Thr359, 400-404, Asp433, and Asn440 contribute to the L-aspartate site; that span reads IPQAG. The discontinuously helical intramembrane region spans 383 to 416; the sequence is VVLVSLTATLASIGAAGIPQAGIVTMIMVLIAIG. A helical transmembrane segment spans residues 430-451; sequence FMLDRLRTTVNVHGDSIATAVI. Asn440 and Asp444 together coordinate Na(+).

Belongs to the dicarboxylate/amino acid:cation symporter (DAACS) (TC 2.A.23) family.

The protein resides in the cell membrane. Sodium-dependent, high-affinity amino acid transporter that mediates the uptake of L-glutamate and also L-aspartate and D-aspartate. Functions as a symporter that transports one amino acid molecule together with two or three Na(+) ions and one proton, in parallel with the counter-transport of one K(+) ion. Mediates Cl(-) flux that is not coupled to amino acid transport; this avoids the accumulation of negative charges due to aspartate and Na(+) symport. The chain is Putative sodium-dependent excitatory amino acid transporter glt-4 (glt-4) from Caenorhabditis elegans.